Here is a 72-residue protein sequence, read N- to C-terminus: MAKEESIEVEGEILEALPNAQFRVKLENGLEVLAHVSGKIRMHYIRILPGDKVKVQISPYDLSKGRITYRYK.

Positions 1-72 (MAKEESIEVE…SKGRITYRYK (72 aa)) constitute an S1-like domain.

This sequence belongs to the IF-1 family. Component of the 30S ribosomal translation pre-initiation complex which assembles on the 30S ribosome in the order IF-2 and IF-3, IF-1 and N-formylmethionyl-tRNA(fMet); mRNA recruitment can occur at any time during PIC assembly.

It is found in the cytoplasm. One of the essential components for the initiation of protein synthesis. Stabilizes the binding of IF-2 and IF-3 on the 30S subunit to which N-formylmethionyl-tRNA(fMet) subsequently binds. Helps modulate mRNA selection, yielding the 30S pre-initiation complex (PIC). Upon addition of the 50S ribosomal subunit IF-1, IF-2 and IF-3 are released leaving the mature 70S translation initiation complex. This Chlorobaculum tepidum (strain ATCC 49652 / DSM 12025 / NBRC 103806 / TLS) (Chlorobium tepidum) protein is Translation initiation factor IF-1.